A 372-amino-acid polypeptide reads, in one-letter code: Isoliquiritigenin 2'-O-methyltransferase (372 aa).

The S-adenosyl-L-methionine site is built by Gly-217, Asp-240, Asp-260, Met-261, and Lys-274. His-278 functions as the Proton acceptor in the catalytic mechanism.

The protein belongs to the class I-like SAM-binding methyltransferase superfamily. Cation-independent O-methyltransferase family. COMT subfamily. In terms of assembly, monomer. Homodimer. As to expression, roots (at protein level). Expressed mainly in roots, and to a lesser extent in root nodules. In the roots, expression is not detected in the root tip or the cells immediately behind the tip, but is detected in tissues starting 1.5-2.0 mm distal to the root tip. Detected in the epidermal and cortical cells of 2 day old roots, with lower levels in vascular tissue.

The catalysed reaction is isoliquiritigenin + S-adenosyl-L-methionine = 2'-O-methylisoliquiritigenin + S-adenosyl-L-homocysteine + H(+). It catalyses the reaction licodione + S-adenosyl-L-methionine = 2'-O-methyllicodione + S-adenosyl-L-homocysteine + H(+). With respect to regulation, inhibited by 1 mM Co(2+), Cu(2+), Zn(2+) or Fe(2+). Non-competitively inhibited by S-adenosyl-L-homocysteine. Competitively inhibited by 2'-O-methylisoliquiritigenin. Functionally, methylates the 2'-hydroxyl of isoliquiritigenin and licodione. Does not methylate narigenin chalcone, caffeic acid or daidzein. Involved in the root nodulation initiation by promoting the biosynthesis of nod-inducing molecules. The sequence is that of Isoliquiritigenin 2'-O-methyltransferase from Medicago sativa (Alfalfa).